An 80-amino-acid polypeptide reads, in one-letter code: Histone H1.M6.1 (80 aa).

The segment at 1–80 (MSDAAVPPKK…KAVKKAPKKK (80 aa)) is disordered. The segment covering 11-80 (ASPKKAAAKK…KAVKKAPKKK (70 aa)) has biased composition (basic residues).

The protein localises to the nucleus. The protein resides in the chromosome. This Trypanosoma cruzi protein is Histone H1.M6.1.